A 1436-amino-acid chain; its full sequence is MLHLSAAPPAPPPEVTATARPCLCSVGRRGDGGKMAAAGALERSFVELSGAERERPRHFREFTVCSIGTANAVAGAVKYSESAGGFYYVESGKLFSVTRNRFIHWKTSGDTLELMEESLDINLLNNAIRLKFQNCSVLPGGVYVSETQNRVIILMLTNQTVHRLLLPHPSRMYRSELVVDSQMQSIFTDIGKVDFTDPCNYQLIPAVPGISPNSTASTAWLSSDGEALFALPCASGGIFVLKLPPYDIPGMVSVVELKQSSVMQRLLTGWMPTAIRGDQSPSDRPLSLAVHCVEHDAFIFALCQDHKLRMWSYKEQMCLMVADMLEYVPVKKDLRLTAGTGHKLRLAYSPTMGLYLGIYMHAPKRGQFCIFQLVSTESNRYSLDHISSLFTSQETLIDFALTSTDIWALWHDAENQTVVKYINFEHNVAGQWNPVFMQPLPEEEIVIRDDQDPREMYLQSLFTPGQFTNEALCKALQIFCRGTERNLDLSWSELKKEVTLAVENELQGSVTEYEFSQEEFRNLQQEFWCKFYACCLQYQEALSHPLALHLNPHTNMVCLLKKGYLSFLIPSSLVDHLYLLPYENLLTEDETTISDDVDIARDVICLIKCLRLIEESVTVDMSVIMEMSCYNLQSPEKAAEQILEDMITIDVENVMEDICSKLQEIRNPIHAIGLLIREMDYETEVEMEKGFNPAQPLNIRMNLTQLYGSNTAGYIVCRGVHKIASTRFLICRDLLILQQLLMRLGDAVIWGTGQLFQAQQDLLHRTAPLLLSYYLIKWGSECLATDVPLDTLESNLQHLSVLELTDSGALMANRFVSSPQTIVELFFQEVARKHIISHLFSQPKAPLSQTGLNWPEMITAITSYLLQLLWPSNPGCLFLECLMGNCQYVQLQDYIQLLHPWCQVNVGSCRFMLGRCYLVTGEGQKALECFCQAASEVGKEEFLDRLIRSEDGEIVSTPRLQYYDKVLRLLDVIGLPELVIQLATSAITEAGDDWKSQATLRTCIFKHHLDLGHNSQAYEALTQIPDSSRQLDCLRQLVVVLCERSQLQDLVEFPYVNLHNEVVGIIESRARAVDLMTHNYYELLYAFHIYRHNYRKAGTVMFEYGMRLGREVRTLRGLEKQGNCYLAALNCLRLIRPEYAWIVQPVSGAVYDRPGASPKRNHDGECTAAPTNRQIEILELEDLEKECSLARIRLTLAQHDPSAVAVAGSSSAEEMVTLLVQAGLFDTAISLCQTFKLPLTPVFEGLAFKCIKLQFGGEAAQAEAWAWLAANQLSSVITTKESSATDEAWRLLSTYLERYKVQNNLYHHCVINKLLSHGVPLPNWLINSYKKVDAAELLRLYLNYDLLEEAVDLVSEYVDAVLGKGHQYFGIEFPLSATAPMVWLPYSSIDQLLQALGENSANSHNIALSQKILDKLEDYQQKVDKATRDLLYRRTL.

Phosphoserine is present on residues Ser-44, Ser-490, Ser-949, and Ser-1157.

As to quaternary structure, part of the nuclear pore complex (NPC). Forms part of the NUP160 subcomplex in the nuclear pore which is composed of NUP160, NUP133, NUP107 and NUP96. This complex plays a role in RNA export and in tethering NUP98 and NUP153 to the nucleus.

It is found in the nucleus. The protein resides in the nuclear pore complex. Functionally, functions as a component of the nuclear pore complex (NPC). Involved in poly(A)+ RNA transport. The sequence is that of Nuclear pore complex protein Nup160 (NUP160) from Homo sapiens (Human).